The chain runs to 1897 residues: uncharacterized protein (1897 aa).

The Peptidase S74 domain maps to 1661-1888 (SDERVKTNIR…AKVISLESRL (228 aa)). Residues 1865–1894 (AALQEIDRQLQLEKAKVISLESRLSALELK) are a coiled coil.

This is an uncharacterized protein from Micromonas pusilla (Picoplanktonic green alga).